We begin with the raw amino-acid sequence, 216 residues long: ATP-dependent Clp protease proteolytic subunit (216 aa).

S120 functions as the Nucleophile in the catalytic mechanism. H145 is an active-site residue.

Belongs to the peptidase S14 family. In terms of assembly, fourteen ClpP subunits assemble into 2 heptameric rings which stack back to back to give a disk-like structure with a central cavity, resembling the structure of eukaryotic proteasomes.

The protein resides in the cytoplasm. It catalyses the reaction Hydrolysis of proteins to small peptides in the presence of ATP and magnesium. alpha-casein is the usual test substrate. In the absence of ATP, only oligopeptides shorter than five residues are hydrolyzed (such as succinyl-Leu-Tyr-|-NHMec, and Leu-Tyr-Leu-|-Tyr-Trp, in which cleavage of the -Tyr-|-Leu- and -Tyr-|-Trp bonds also occurs).. Functionally, cleaves peptides in various proteins in a process that requires ATP hydrolysis. Has a chymotrypsin-like activity. Plays a major role in the degradation of misfolded proteins. The chain is ATP-dependent Clp protease proteolytic subunit from Cupriavidus necator (strain ATCC 17699 / DSM 428 / KCTC 22496 / NCIMB 10442 / H16 / Stanier 337) (Ralstonia eutropha).